Here is a 189-residue protein sequence, read N- to C-terminus: Peptidyl-tRNA hydrolase (189 aa).

Residue Phe-15 participates in tRNA binding. His-20 serves as the catalytic Proton acceptor. TRNA is bound by residues Tyr-65, Asn-67, and Asn-113.

The protein belongs to the PTH family. Monomer.

Its subcellular location is the cytoplasm. It catalyses the reaction an N-acyl-L-alpha-aminoacyl-tRNA + H2O = an N-acyl-L-amino acid + a tRNA + H(+). In terms of biological role, hydrolyzes ribosome-free peptidyl-tRNAs (with 1 or more amino acids incorporated), which drop off the ribosome during protein synthesis, or as a result of ribosome stalling. Catalyzes the release of premature peptidyl moieties from peptidyl-tRNA molecules trapped in stalled 50S ribosomal subunits, and thus maintains levels of free tRNAs and 50S ribosomes. The protein is Peptidyl-tRNA hydrolase of Phytoplasma australiense.